The chain runs to 451 residues: Plasmepsin III (451 aa).

The Cytoplasmic segment spans residues methionine 1–leucine 37. Positions methionine 1–glycine 123 are excised as a propeptide. Residues phenylalanine 38 to phenylalanine 58 traverse the membrane as a helical; Signal-anchor for type II membrane protein segment. The Lumenal portion of the chain corresponds to glutamate 59 to leucine 451. The 308-residue stretch at serine 139 to alanine 446 folds into the Peptidase A1 domain. Intrachain disulfides connect cysteine 170-cysteine 175 and cysteine 372-cysteine 408.

Belongs to the peptidase A1 family. In terms of assembly, probable homodimer; in the zymogen form. Monomer; in the active form. Acidification disrupts homodimerization. Component of the hemozoin formation complex (HFC) composed of falcipains FP2A and/or FP2B, plasmepsins PMII, PMIII/HAP and PMIV, heme detoxifying protein HDP and falcilysin FLN. The HFC complex is involved in hemoglobin degradation and detoxification of heme in the food vacuole during the asexual blood stage. Proteolytically cleaved into the soluble active mature form by cysteine proteases in the digestive vacuole of trophozoites. Proteolysis requires an acidic environment. Transprocessing may serve as an alternate activation system.

The protein resides in the membrane. The protein localises to the vacuole lumen. The enzyme catalyses Hydrolysis of the bonds linking certain hydrophobic residues in hemoglobin or globin. Also cleaves small molecules substrates such as Ala-Leu-Glu-Arg-Thr-Phe-|-Phe(NO2)-Ser-Phe-Pro-Thr.. Its activity is regulated as follows. Dimerization causes loss of catalytic activity. Inhibited by pepstatin A. Inhibited by Zn(2+). Functionally, during the asexual blood stage, catalyzes the cleavage of denatured host hemoglobin (Hb) or globins. Digestion of host Hb is an essential step which provides the parasite with amino acids for protein synthesis, and regulates osmolarity. This is Plasmepsin III from Plasmodium falciparum (isolate 3D7).